The primary structure comprises 404 residues: Acetate kinase (404 aa).

Asn-7 lines the Mg(2+) pocket. Residue Lys-14 coordinates ATP. Arg-95 is a substrate binding site. Asp-152 acts as the Proton donor/acceptor in catalysis. ATP is bound by residues 212–216, 286–288, and 334–338; these read HLGNG, DMR, and GIGEN. Glu-388 provides a ligand contact to Mg(2+).

The protein belongs to the acetokinase family. Homodimer. It depends on Mg(2+) as a cofactor. The cofactor is Mn(2+).

It is found in the cytoplasm. It carries out the reaction acetate + ATP = acetyl phosphate + ADP. Its pathway is metabolic intermediate biosynthesis; acetyl-CoA biosynthesis; acetyl-CoA from acetate: step 1/2. In terms of biological role, catalyzes the formation of acetyl phosphate from acetate and ATP. Can also catalyze the reverse reaction. The polypeptide is Acetate kinase (Lawsonia intracellularis (strain PHE/MN1-00)).